The chain runs to 873 residues: MKYLSPLSLSDTQLNITELKQQLTLFSQYQINAFHQHKAVSDLVFERSHYFDQLLSRLWQFFKFDDIANTSLIAVGGYGRSELHPLSDIDILILTENNTNDTFCQKVGELVTLLWDLKLEIGHSVRSIAECIEIGQNDLTVATNLQEARYICGNKELSHQLKLKIHSDSFWPSESFYQAKIDEQKKRHSRYHDTTYNLEPDIKSSPGGLRDIHTLSWIARRHFGATSLLEMSQAGFLTDAEYRELLECQEFLWRVRFALHIELKRYDNRLTFGHQASVAEHLGFIGEGNRGVERMMKEFYRTLRRVAELNSMLLKIFDQAILHQGEQDDAIIIDDDFQRRGRLIEARKPALFQARPDTILDMFLLMANDSTIDGVAPPTMRQLRTARRRLNRFLCEIPEAKEKFLQLTQHPNALNNAFSSMHKLGVLSAYLPQWSHIVGQMQFDLFHAYTVDEHSIRLLKHINKFSDTTNRDKHPICCEIFPKIMKKELLIIAAIFHDIAKGRGGDHSELGAVDAYDFCISHGLSKPEANLVSWLVKSHLLMSVTAQRRDIYDPDVITEFAKQVRDEERLDYLVCLTVADICATNPDLWNSWKRSLIADLYNATQRALRRGLENPPDLRDRIRHNQQMASAQLRSEGFTQWEVDALWRRFKADYFLRHTHKQIAWHASHLLRHQDKEKSLILISKNASRGGTEIFVYSKDQPHLFATVAAELDRRSITIYDAQVMSSKDGYALDTFMVLDQNDDPIDEERQQRLIDQLYDVKLNDQATHIKTRRPPRQLQHFNVKTRMEFLPTKTGKRTLMEFVALDTPGLLATVGATFAQLGINLHAAKITTIGERAEDLFILTSDVGGRLDDDKQAELEIALVKNVARLSS.

A uridylyltransferase region spans residues 1–332 (MKYLSPLSLS…HQGEQDDAII (332 aa)). The tract at residues 333–692 (IDDDFQRRGR…ISKNASRGGT (360 aa)) is uridylyl-removing. The HD domain maps to 451–573 (VDEHSIRLLK…VRDEERLDYL (123 aa)). ACT domains follow at residues 693-777 (EIFV…RPPR) and 800-873 (LMEF…RLSS).

It belongs to the GlnD family. It depends on Mg(2+) as a cofactor.

The enzyme catalyses [protein-PII]-L-tyrosine + UTP = [protein-PII]-uridylyl-L-tyrosine + diphosphate. It carries out the reaction [protein-PII]-uridylyl-L-tyrosine + H2O = [protein-PII]-L-tyrosine + UMP + H(+). With respect to regulation, uridylyltransferase (UTase) activity is inhibited by glutamine, while glutamine activates uridylyl-removing (UR) activity. Functionally, modifies, by uridylylation and deuridylylation, the PII regulatory proteins (GlnB and homologs), in response to the nitrogen status of the cell that GlnD senses through the glutamine level. Under low glutamine levels, catalyzes the conversion of the PII proteins and UTP to PII-UMP and PPi, while under higher glutamine levels, GlnD hydrolyzes PII-UMP to PII and UMP (deuridylylation). Thus, controls uridylylation state and activity of the PII proteins, and plays an important role in the regulation of nitrogen assimilation and metabolism. The polypeptide is Bifunctional uridylyltransferase/uridylyl-removing enzyme (Aliivibrio fischeri (strain MJ11) (Vibrio fischeri)).